Reading from the N-terminus, the 199-residue chain is Dephospho-CoA kinase (199 aa).

Residues 3-199 (KVGLTGGICS…DLLEFFTLYQ (197 aa)) enclose the DPCK domain. 11–16 (CSGKST) is an ATP binding site.

The protein belongs to the CoaE family.

It localises to the cytoplasm. It catalyses the reaction 3'-dephospho-CoA + ATP = ADP + CoA + H(+). The protein operates within cofactor biosynthesis; coenzyme A biosynthesis; CoA from (R)-pantothenate: step 5/5. Functionally, catalyzes the phosphorylation of the 3'-hydroxyl group of dephosphocoenzyme A to form coenzyme A. This chain is Dephospho-CoA kinase, found in Clostridium perfringens (strain 13 / Type A).